We begin with the raw amino-acid sequence, 570 residues long: Mitoguardin 1 (570 aa).

A helical membrane pass occupies residues 34–54; sequence GLKKIIAVAAISGVSLIFLAC.

This sequence belongs to the mitoguardin family. Homodimer and heterodimer; forms heterodimers with miga2.

The protein localises to the mitochondrion outer membrane. Regulator of mitochondrial fusion: acts by forming homo- and heterodimers at the mitochondrial outer membrane and facilitating the formation of pld6/MitoPLD dimers. May act by regulating phospholipid metabolism via pld6/MitoPLD. In Xenopus laevis (African clawed frog), this protein is Mitoguardin 1.